We begin with the raw amino-acid sequence, 1976 residues long: Myosin-10 (1976 aa).

Residue arginine 18 is modified to Omega-N-methylarginine. The 51-residue stretch at 31–81 (TAKKLVWIPSERHGFEAASIKEERGDEVMVELAENGKKAMVNKDDIQKMNP) folds into the Myosin N-terminal SH3-like domain. The Myosin motor domain occupies 85–783 (SKVEDMAELT…VLAHLEEERD (699 aa)). 178 to 185 (GESGAGKT) serves as a coordination point for ATP. At lysine 442 the chain carries N6-acetyllysine. Residues 661 to 683 (LTKLMATLRNTNPNFVRCIIPNH) are actin-binding. In terms of domain architecture, IQ spans 786-815 (ITDIIIFFQAVCRGYLARKAFAKKQQQLSA). The stretch at 845–1976 (LQVTRQEEEL…VNETQPPQSE (1132 aa)) forms a coiled coil. The tract at residues 1125–1175 (EDFESEKASRNKAEKQKRDLSEELEALKTELEDTLDTTAAQQELRTKREQE) is disordered. A compositionally biased stretch (basic and acidic residues) spans 1129 to 1155 (SEKASRNKAEKQKRDLSEELEALKTEL). A Phosphoserine modification is found at serine 1145. N6-acetyllysine occurs at positions 1241, 1301, and 1645. 2 disordered regions span residues 1697 to 1718 (ASSERARRHAEQERDELADEIA) and 1874 to 1976 (KANA…PQSE). Over residues 1698–1708 (SSERARRHAEQ) the composition is skewed to basic and acidic residues. At arginine 1930 the chain carries Omega-N-methylarginine. Phosphoserine occurs at positions 1935, 1937, 1938, and 1939. An Omega-N-methylarginine modification is found at arginine 1940. A phosphoserine mark is found at serine 1952 and serine 1956. Threonine 1960 carries the phosphothreonine modification. The span at 1967 to 1976 (VNETQPPQSE) shows a compositional bias: polar residues. Residue serine 1975 is modified to Phosphoserine.

The protein belongs to the TRAFAC class myosin-kinesin ATPase superfamily. Myosin family. In terms of assembly, myosin is a hexameric protein that consists of 2 heavy chain subunits (MHC), 2 alkali light chain subunits (MLC) and 2 regulatory light chain subunits (MLC-2). Interacts with PLEKHG6. Interacts with ECPAS. Interacts with KIF26B. Interacts with LARP6. Interacts with MCC. Interacts with CFAP95. In terms of processing, phosphorylated by ABL2.

Its subcellular location is the cell projection. The protein resides in the lamellipodium. In terms of biological role, involved with LARP6 in the stabilization of type I collagen mRNAs for CO1A1 and CO1A2. During cell spreading, plays an important role in cytoskeleton reorganization, focal contacts formation (in the central part but not the margins of spreading cells), and lamellipodial extension; this function is mechanically antagonized by MYH9. Cellular myosin that appears to play a role in cytokinesis, cell shape, and specialized functions such as secretion and capping. This Rattus norvegicus (Rat) protein is Myosin-10 (Myh10).